Reading from the N-terminus, the 1462-residue chain is Tyrosine-protein phosphatase 69D (1462 aa).

A signal peptide spans 1–28 (MALLYRRMSMLLNIILAYIFLCAICVQG). Ig-like C2-type domains lie at 29–125 (SVKQ…TEFQ) and 131–230 (PSKV…KEIT). The Extracellular portion of the chain corresponds to 29–805 (SVKQEWAEIG…MDYYLSIGVK (777 aa)). Residues Asn40, Asn58, Asn64, Asn85, Asn109, Asn119, Asn162, Asn191, Asn196, Asn209, Asn255, Asn288, Asn302, Asn429, Asn442, Asn451, Asn516, Asn613, Asn701, and Asn755 are each glycosylated (N-linked (GlcNAc...) asparagine). A disulfide bridge connects residues Cys45 and Cys112. A disulfide bridge connects residues Cys154 and Cys214. Fibronectin type-III domains lie at 237–332 (PQVS…TLSY), 334–435 (PIFI…TMDG), and 439–547 (KPTN…TPDA). A helical transmembrane segment spans residues 806–823 (AGAVLLGVILVFIVLWVF). The Cytoplasmic segment spans residues 824-1462 (HHKKTKNELQ…LHHIAESTLD (639 aa)). Tyrosine-protein phosphatase domains lie at 893–1156 (FLRE…LLDT) and 1187–1450 (LEVE…IINY). Active-site phosphocysteine intermediate residues include Cys1097 and Cys1391.

Belongs to the protein-tyrosine phosphatase family. Receptor class subfamily.

The protein localises to the membrane. It carries out the reaction O-phospho-L-tyrosyl-[protein] + H2O = L-tyrosyl-[protein] + phosphate. In terms of biological role, possible cell adhesion receptor. In Drosophila melanogaster (Fruit fly), this protein is Tyrosine-protein phosphatase 69D (Ptp69D).